The following is a 461-amino-acid chain: pre-mRNA splicing regulator USH1G (461 aa).

3 ANK repeats span residues 31-60, 64-93, and 97-126; these read DGMTPTLWAAYHGNLESLRLIVSRGGDPDK, WGNTPLHLAASNGHLHCLSFLVSFGANIWC, and DYHTPLDMAAMKGHMECVRYLDSIAAKQSS. Disordered stretches follow at residues 208-243 and 332-368; these read GTARGKTKMQKKLERRKQGGEGTFKVSEDGRKSARS and EDGGLDGVGAPRGRLQSSPSLDDDSLGSANSLQDRSC. Residues 210-222 show a composition bias toward basic residues; that stretch reads ARGKTKMQKKLER. Positions 385–447 constitute an SAM domain; that stretch reads LEPETSPLET…KILGAVRRRR (63 aa). Serine 422 is modified (phosphoserine; by CK2).

In terms of assembly, part of a complex composed of USH1C, USH1G and MYO7A. Interacts with USH1C (via the first PDZ domain). Interacts with PDZD7. Interacts with CDH23 and PCDH15; these interactions may recruit USH1G to the plasma membrane. Interacts with intraflagellar transport proteins IFT20, IFT52 and IFT57. Interacts with splicing factors SF3B1, PRPF6, PRPF31 and SON. Interacts with the U4/U6.U5 tri-small nuclear ribonucleoprotein (tri-snRNP) complex in the presence of pre-mRNAs. Interacts (via SAM domain) with MAGI2 (via PDZ 6 domain); the interaction is triggered by phosphorylation of USH1G by CK2 and negatively regulates MAGI2-mediated endocytosis. In terms of tissue distribution, expressed in vestibule of the inner ear, eye and small intestine.

It is found in the cytoplasm. It localises to the cytosol. Its subcellular location is the cytoskeleton. The protein resides in the cell membrane. The protein localises to the cell projection. It is found in the cilium. It localises to the nucleus speckle. Its subcellular location is the nucleus. The protein resides in the cajal body. The protein localises to the microtubule organizing center. It is found in the centrosome. It localises to the photoreceptor inner segment. Functionally, plays a role in pre-mRNA splicing by regulating the release and transfer of U4/U6.U5 tri-small nuclear ribonucleoprotein (tri-snRNP) complexes from their assembly site in Cajal bodies to nuclear speckles, thereby contributing to the assembly of the pre-catalytic spliceosome on target pre-mRNAs. May also participate in recycling of snRNPs back to Cajal bodies during splicing. Plays a role in regulating MAGI2-mediated endocytosis. Anchoring/scaffolding protein that is a part of the functional network formed by USH1C, USH1G, CDH23 and MYO7A that mediates mechanotransduction in cochlear hair cells. Required for normal development and maintenance of cochlear hair cell bundles. Required for normal hearing. In Homo sapiens (Human), this protein is pre-mRNA splicing regulator USH1G (USH1G).